The following is a 129-amino-acid chain: Glycine cleavage system H protein (129 aa).

A Lipoyl-binding domain is found at 24 to 106 (TYTVGITEHA…YAGGWIFKIK (83 aa)). Lys-65 is modified (N6-lipoyllysine).

It belongs to the GcvH family. The glycine cleavage system is composed of four proteins: P, T, L and H. The cofactor is (R)-lipoate.

In terms of biological role, the glycine cleavage system catalyzes the degradation of glycine. The H protein shuttles the methylamine group of glycine from the P protein to the T protein. The protein is Glycine cleavage system H protein of Shigella dysenteriae serotype 1 (strain Sd197).